Here is a 311-residue protein sequence, read N- to C-terminus: Aspartate carbamoyltransferase catalytic subunit (311 aa).

Positions 52 and 53 each coordinate carbamoyl phosphate. Lysine 80 is a binding site for L-aspartate. Positions 102, 131, and 134 each coordinate carbamoyl phosphate. Residues arginine 164 and arginine 216 each coordinate L-aspartate. Positions 259 and 260 each coordinate carbamoyl phosphate.

Belongs to the aspartate/ornithine carbamoyltransferase superfamily. ATCase family. Heterododecamer (2C3:3R2) of six catalytic PyrB chains organized as two trimers (C3), and six regulatory PyrI chains organized as three dimers (R2).

The catalysed reaction is carbamoyl phosphate + L-aspartate = N-carbamoyl-L-aspartate + phosphate + H(+). The protein operates within pyrimidine metabolism; UMP biosynthesis via de novo pathway; (S)-dihydroorotate from bicarbonate: step 2/3. Functionally, catalyzes the condensation of carbamoyl phosphate and aspartate to form carbamoyl aspartate and inorganic phosphate, the committed step in the de novo pyrimidine nucleotide biosynthesis pathway. This chain is Aspartate carbamoyltransferase catalytic subunit, found in Lactiplantibacillus plantarum (strain ATCC BAA-793 / NCIMB 8826 / WCFS1) (Lactobacillus plantarum).